We begin with the raw amino-acid sequence, 350 residues long: Phospho-N-acetylmuramoyl-pentapeptide-transferase (350 aa).

9 consecutive transmembrane segments (helical) span residues 28–48, 70–90, 100–120, 136–156, 164–184, 195–215, 221–241, 249–269, and 328–348; these read LPLL…IPLL, GTPT…GSLI, LLSL…DDWS, LLLQ…QGWI, FGLE…VVLA, LDGL…LQLM, GDPA…GFLV, AFMG…VALL, and QSVV…GLVL.

It belongs to the glycosyltransferase 4 family. MraY subfamily. The cofactor is Mg(2+).

The protein localises to the cell inner membrane. It catalyses the reaction UDP-N-acetyl-alpha-D-muramoyl-L-alanyl-gamma-D-glutamyl-meso-2,6-diaminopimeloyl-D-alanyl-D-alanine + di-trans,octa-cis-undecaprenyl phosphate = di-trans,octa-cis-undecaprenyl diphospho-N-acetyl-alpha-D-muramoyl-L-alanyl-D-glutamyl-meso-2,6-diaminopimeloyl-D-alanyl-D-alanine + UMP. The protein operates within cell wall biogenesis; peptidoglycan biosynthesis. Its function is as follows. Catalyzes the initial step of the lipid cycle reactions in the biosynthesis of the cell wall peptidoglycan: transfers peptidoglycan precursor phospho-MurNAc-pentapeptide from UDP-MurNAc-pentapeptide onto the lipid carrier undecaprenyl phosphate, yielding undecaprenyl-pyrophosphoryl-MurNAc-pentapeptide, known as lipid I. The protein is Phospho-N-acetylmuramoyl-pentapeptide-transferase of Synechococcus sp. (strain CC9605).